The sequence spans 508 residues: MTEPTQTQPAVTADENQIIAERREKLRALREQGVAYPNDFRPEHHAADLQAKFADSDKAALEANPVEVSVAGRMMLKRVMGKASFATVQDGSGQIQFFVTPNDVGADTYDAFKKWDLGDIVAARGVLFRTNKGELSVQCKELRLLSKALRPLPDKFHGLSDQEMRYRQRYVDLIVTPETRDTFRARTKTIASIRKFMDNADFMEVETPMLHPIPGGAAAKPFVTHHNALDMQMFLRIAPELYLKRLIVGGFERVFEINRNFRNEGVSPRHNPEFTMMEFYAAYTDYRWLMDFTEQLIRQAAIDALGTATIQYQGRELDLAKPFHRLTITQAIQKYAPDYTDGQLSDDAFLRTELKRFGVDVSQPAFLNAGIGALQLALFEETAEAQLWEPTFIIDYPVEVSPLARASDTVPGITERFELFMTGREIANGFSELNDPEDQAARFKKQVEQKDAGDEEAMFFDADYIRALEYGMPPTGGCGIGIDRLVMLLTDSPTIRDVLLFPHLRRED.

Positions 418 and 425 each coordinate Mg(2+).

Belongs to the class-II aminoacyl-tRNA synthetase family. Homodimer. It depends on Mg(2+) as a cofactor.

It localises to the cytoplasm. The enzyme catalyses tRNA(Lys) + L-lysine + ATP = L-lysyl-tRNA(Lys) + AMP + diphosphate. This chain is Lysine--tRNA ligase, found in Burkholderia cenocepacia (strain HI2424).